The primary structure comprises 172 residues: Adenine phosphoribosyltransferase (172 aa).

Belongs to the purine/pyrimidine phosphoribosyltransferase family. Homodimer.

It localises to the cytoplasm. It carries out the reaction AMP + diphosphate = 5-phospho-alpha-D-ribose 1-diphosphate + adenine. The protein operates within purine metabolism; AMP biosynthesis via salvage pathway; AMP from adenine: step 1/1. Its function is as follows. Catalyzes a salvage reaction resulting in the formation of AMP, that is energically less costly than de novo synthesis. This Methanococcus maripaludis (strain DSM 14266 / JCM 13030 / NBRC 101832 / S2 / LL) protein is Adenine phosphoribosyltransferase.